Consider the following 145-residue polypeptide: Protein SprT-like (145 aa).

The SprT-like domain maps to 5-141 (DYVREVSLAD…CGRCHGRLIK (137 aa)). Histidine 64 serves as a coordination point for Zn(2+). Glutamate 65 is a catalytic residue. Position 68 (histidine 68) interacts with Zn(2+).

It belongs to the SprT family. Requires Zn(2+) as cofactor.

The protein localises to the cytoplasm. This is Protein SprT-like from Streptococcus equi subsp. zooepidemicus (strain H70).